Consider the following 287-residue polypeptide: ATP synthase gamma chain (287 aa).

The protein belongs to the ATPase gamma chain family. As to quaternary structure, F-type ATPases have 2 components, CF(1) - the catalytic core - and CF(0) - the membrane proton channel. CF(1) has five subunits: alpha(3), beta(3), gamma(1), delta(1), epsilon(1). CF(0) has three main subunits: a, b and c.

The protein localises to the cell inner membrane. Its function is as follows. Produces ATP from ADP in the presence of a proton gradient across the membrane. The gamma chain is believed to be important in regulating ATPase activity and the flow of protons through the CF(0) complex. This Escherichia coli (strain 55989 / EAEC) protein is ATP synthase gamma chain.